The sequence spans 150 residues: uncharacterized protein (150 aa).

3 consecutive transmembrane segments (helical) span residues 48-68 (LFLL…CFLF), 89-109 (VFIF…YLLP), and 123-143 (REVF…IFTL).

To M.pneumoniae MPN_085 central region.

The protein localises to the cell membrane. This is an uncharacterized protein from Mycoplasma pneumoniae (strain ATCC 29342 / M129 / Subtype 1) (Mycoplasmoides pneumoniae).